The sequence spans 198 residues: 3-isopropylmalate dehydratase small subunit (198 aa).

The protein belongs to the LeuD family. LeuD type 1 subfamily. As to quaternary structure, heterodimer of LeuC and LeuD.

It carries out the reaction (2R,3S)-3-isopropylmalate = (2S)-2-isopropylmalate. The protein operates within amino-acid biosynthesis; L-leucine biosynthesis; L-leucine from 3-methyl-2-oxobutanoate: step 2/4. Functionally, catalyzes the isomerization between 2-isopropylmalate and 3-isopropylmalate, via the formation of 2-isopropylmaleate. This is 3-isopropylmalate dehydratase small subunit from Mycobacterium leprae (strain Br4923).